Reading from the N-terminus, the 122-residue chain is uncharacterized protein (122 aa).

Positions 1 to 17 (MKYSSIFSMLSFFILFA) are cleaved as a signal peptide.

This is an uncharacterized protein from Escherichia coli (strain K12).